Reading from the N-terminus, the 713-residue chain is RNA-binding protein vts1 (713 aa).

Low complexity predominate over residues 154–188 (NSGLSLDKSLPSSPKGDSPSLSSSLPSLTTKSNLS). Disordered regions lie at residues 154-208 (NSGL…SSKH), 254-336 (EPPA…RDRG), 356-389 (DESS…SRPL), 554-596 (EKIE…GNEL), and 667-713 (KAAK…SSMD). Polar residues-rich tracts occupy residues 189–208 (GNLN…SSKH) and 258–281 (SSAS…NANV). 2 stretches are compositionally biased toward low complexity: residues 282-297 (TSSL…SKTT) and 304-320 (SKKS…PNTS). Positions 321 to 330 (FFETPHNNIW) are enriched in polar residues. The segment covering 369–378 (SPPPPPPPPE) has biased composition (pro residues). A compositionally biased stretch (polar residues) spans 559 to 569 (PPNNSKNQTYR). The segment covering 570 to 583 (RSSRGSNKTRKSIS) has biased composition (basic residues). One can recognise an SAM domain in the interval 595–656 (ELPQDIPSWL…LKSFQEVAPL (62 aa)). Polar residues predominate over residues 670 to 681 (KNQSSESLTSFK). Phosphoserine is present on Ser-673. A compositionally biased stretch (low complexity) spans 691 to 702 (SGSMSNEISSNS). Polar residues predominate over residues 703–713 (TKQDVSSSSMD).

It belongs to the VTS1 family. Monomer. Binds to RNA.

The protein resides in the cytoplasm. It is found in the cytosol. The protein localises to the P-body. Functionally, RNA-binding protein involved in post-transcriptional regulation through transcript degradation. This Schizosaccharomyces pombe (strain 972 / ATCC 24843) (Fission yeast) protein is RNA-binding protein vts1.